The following is a 119-amino-acid chain: MPRVKRGVTAHARHKKVIAQAKGYRGRRKNVYRVANQAITRASQYAYRDRRQRKRQFRALWIVRINAAARECGLSYSRLISGLKRAAIEIDRKVLADLAVRDKAAFTTIAEQAKVALSD.

Belongs to the bacterial ribosomal protein bL20 family.

Functionally, binds directly to 23S ribosomal RNA and is necessary for the in vitro assembly process of the 50S ribosomal subunit. It is not involved in the protein synthesizing functions of that subunit. This Nitrosococcus oceani (strain ATCC 19707 / BCRC 17464 / JCM 30415 / NCIMB 11848 / C-107) protein is Large ribosomal subunit protein bL20.